The following is a 219-amino-acid chain: Pyridoxine/pyridoxamine 5'-phosphate oxidase (219 aa).

Substrate-binding positions include 13-16 (RVEY) and Lys76. FMN-binding positions include 71-76 (RSVLCK), 86-87 (FT), Lys93, and Gln115. The substrate site is built by Tyr133, Arg137, and Ser141. FMN contacts are provided by residues 150–151 (QS) and Trp196. Residue 202 to 204 (RVH) coordinates substrate. Residue Arg206 coordinates FMN.

The protein belongs to the pyridoxamine 5'-phosphate oxidase family. In terms of assembly, homodimer. It depends on FMN as a cofactor.

The enzyme catalyses pyridoxamine 5'-phosphate + O2 + H2O = pyridoxal 5'-phosphate + H2O2 + NH4(+). It carries out the reaction pyridoxine 5'-phosphate + O2 = pyridoxal 5'-phosphate + H2O2. Its pathway is cofactor metabolism; pyridoxal 5'-phosphate salvage; pyridoxal 5'-phosphate from pyridoxamine 5'-phosphate: step 1/1. The protein operates within cofactor metabolism; pyridoxal 5'-phosphate salvage; pyridoxal 5'-phosphate from pyridoxine 5'-phosphate: step 1/1. Functionally, catalyzes the oxidation of either pyridoxine 5'-phosphate (PNP) or pyridoxamine 5'-phosphate (PMP) into pyridoxal 5'-phosphate (PLP). This chain is Pyridoxine/pyridoxamine 5'-phosphate oxidase, found in Mycobacterium leprae (strain TN).